Reading from the N-terminus, the 443-residue chain is Ribosomal protein uS12 methylthiotransferase RimO (443 aa).

The region spanning 6–116 (PRVGMISLGC…VVNAVHDVVP (111 aa)) is the MTTase N-terminal domain. Residues Cys-15, Cys-51, Cys-80, Cys-149, Cys-153, and Cys-156 each coordinate [4Fe-4S] cluster. A Radical SAM core domain is found at 135–373 (LTPRHYAYLK…MAHQQAISAA (239 aa)). Residues 376 to 443 (QMKIGKEIEV…DEYDLWAEML (68 aa)) enclose the TRAM domain.

It belongs to the methylthiotransferase family. RimO subfamily. The cofactor is [4Fe-4S] cluster.

The protein resides in the cytoplasm. It carries out the reaction L-aspartate(89)-[ribosomal protein uS12]-hydrogen + (sulfur carrier)-SH + AH2 + 2 S-adenosyl-L-methionine = 3-methylsulfanyl-L-aspartate(89)-[ribosomal protein uS12]-hydrogen + (sulfur carrier)-H + 5'-deoxyadenosine + L-methionine + A + S-adenosyl-L-homocysteine + 2 H(+). In terms of biological role, catalyzes the methylthiolation of an aspartic acid residue of ribosomal protein uS12. The protein is Ribosomal protein uS12 methylthiotransferase RimO of Pseudomonas syringae pv. tomato (strain ATCC BAA-871 / DC3000).